The primary structure comprises 391 residues: tRNA-specific 2-thiouridylase MnmA (391 aa).

Residues 9–16 and Met-35 contribute to the ATP site; that span reads GMSGGVDS. The segment at 95–97 is interaction with target base in tRNA; sequence NPD. Catalysis depends on Cys-100, which acts as the Nucleophile. Residues Cys-100 and Cys-196 are joined by a disulfide bond. Position 124 (Gly-124) interacts with ATP. The tract at residues 146–148 is interaction with tRNA; sequence KDQ. Cys-196 functions as the Cysteine persulfide intermediate in the catalytic mechanism. Residues 308–309 are interaction with tRNA; the sequence is RY.

It belongs to the MnmA/TRMU family.

The protein resides in the cytoplasm. It catalyses the reaction S-sulfanyl-L-cysteinyl-[protein] + uridine(34) in tRNA + AH2 + ATP = 2-thiouridine(34) in tRNA + L-cysteinyl-[protein] + A + AMP + diphosphate + H(+). In terms of biological role, catalyzes the 2-thiolation of uridine at the wobble position (U34) of tRNA, leading to the formation of s(2)U34. The chain is tRNA-specific 2-thiouridylase MnmA from Burkholderia orbicola (strain MC0-3).